The primary structure comprises 72 residues: Long neurotoxin OH-17 (72 aa).

5 cysteine pairs are disulfide-bonded: cysteine 3–cysteine 21, cysteine 14–cysteine 42, cysteine 27–cysteine 31, cysteine 46–cysteine 57, and cysteine 58–cysteine 63.

Belongs to the three-finger toxin family. Long-chain subfamily. Type II alpha-neurotoxin sub-subfamily. In terms of tissue distribution, expressed by the venom gland.

Its subcellular location is the secreted. Functionally, binds with high affinity to muscular (alpha-1/CHRNA1) and neuronal (alpha-7/CHRNA7) nicotinic acetylcholine receptor (nAChR) and inhibits acetylcholine from binding to the receptor, thereby impairing neuromuscular and neuronal transmission. The chain is Long neurotoxin OH-17 from Ophiophagus hannah (King cobra).